Reading from the N-terminus, the 228-residue chain is MKFAVIVFPGSNCDVDMYHAIADELGEEVEYVWHDAENLDRFDAILLPGGFSYGDYLRSGAIARFSNVMKAVKKAADEGKPVLGVCNGFQILLEAGLLPGAMRRNNSLKFICRPVSLRVENNETMFTSAYKQGEVITIPIAHGEGNYYCDEQTLKRLIENRQIVFRYHGENPNGSLDDIAGIVNEKGNVLGMMPHPERAVDSLLGSADGLKLFQSIVKYWRETHVVTA.

One can recognise a Glutamine amidotransferase type-1 domain in the interval 3–226; that stretch reads FAVIVFPGSN…VKYWRETHVV (224 aa). Cys86 functions as the Nucleophile in the catalytic mechanism. Residues His195 and Glu197 contribute to the active site.

In terms of assembly, part of the FGAM synthase complex composed of 1 PurL, 1 PurQ and 2 PurS subunits.

Its subcellular location is the cytoplasm. It carries out the reaction N(2)-formyl-N(1)-(5-phospho-beta-D-ribosyl)glycinamide + L-glutamine + ATP + H2O = 2-formamido-N(1)-(5-O-phospho-beta-D-ribosyl)acetamidine + L-glutamate + ADP + phosphate + H(+). The enzyme catalyses L-glutamine + H2O = L-glutamate + NH4(+). Its pathway is purine metabolism; IMP biosynthesis via de novo pathway; 5-amino-1-(5-phospho-D-ribosyl)imidazole from N(2)-formyl-N(1)-(5-phospho-D-ribosyl)glycinamide: step 1/2. In terms of biological role, part of the phosphoribosylformylglycinamidine synthase complex involved in the purines biosynthetic pathway. Catalyzes the ATP-dependent conversion of formylglycinamide ribonucleotide (FGAR) and glutamine to yield formylglycinamidine ribonucleotide (FGAM) and glutamate. The FGAM synthase complex is composed of three subunits. PurQ produces an ammonia molecule by converting glutamine to glutamate. PurL transfers the ammonia molecule to FGAR to form FGAM in an ATP-dependent manner. PurS interacts with PurQ and PurL and is thought to assist in the transfer of the ammonia molecule from PurQ to PurL. This is Phosphoribosylformylglycinamidine synthase subunit PurQ from Geobacillus sp. (strain WCH70).